Here is a 652-residue protein sequence, read N- to C-terminus: Acetyl-coenzyme A synthetase (652 aa).

CoA contacts are provided by residues 189–192 (RGGK) and Thr311. ATP-binding positions include 387–389 (GEP), 411–416 (DTWWQT), Asp500, and Arg515. Ser523 contacts CoA. Arg526 provides a ligand contact to ATP. Positions 537, 539, and 542 each coordinate Mg(2+). Position 584 (Arg584) interacts with CoA. Lys609 carries the N6-acetyllysine modification.

It belongs to the ATP-dependent AMP-binding enzyme family. Mg(2+) serves as cofactor. Post-translationally, acetylated. Deacetylation by the SIR2-homolog deacetylase activates the enzyme.

It catalyses the reaction acetate + ATP + CoA = acetyl-CoA + AMP + diphosphate. Its function is as follows. Catalyzes the conversion of acetate into acetyl-CoA (AcCoA), an essential intermediate at the junction of anabolic and catabolic pathways. AcsA undergoes a two-step reaction. In the first half reaction, AcsA combines acetate with ATP to form acetyl-adenylate (AcAMP) intermediate. In the second half reaction, it can then transfer the acetyl group from AcAMP to the sulfhydryl group of CoA, forming the product AcCoA. The sequence is that of Acetyl-coenzyme A synthetase from Rhizobium rhizogenes (Agrobacterium rhizogenes).